The sequence spans 52 residues: Photosystem II reaction center protein M (52 aa).

Residues 6-26 (FGFAASLLFVGVPTIFLIGLF) form a helical membrane-spanning segment. The segment at 31-52 (DGEKSSFYSDTSKGRLSPEPKK) is disordered. The span at 42–52 (SKGRLSPEPKK) shows a compositional bias: basic and acidic residues.

Belongs to the PsbM family. In terms of assembly, PSII is composed of 1 copy each of membrane proteins PsbA, PsbB, PsbC, PsbD, PsbE, PsbF, PsbH, PsbI, PsbJ, PsbK, PsbL, PsbM, PsbT, PsbX, PsbY, Psb30/Ycf12, peripheral proteins PsbO, CyanoQ (PsbQ), PsbU, PsbV and a large number of cofactors. It forms dimeric complexes.

It is found in the cellular thylakoid membrane. One of the components of the core complex of photosystem II (PSII). PSII is a light-driven water:plastoquinone oxidoreductase that uses light energy to abstract electrons from H(2)O, generating O(2) and a proton gradient subsequently used for ATP formation. It consists of a core antenna complex that captures photons, and an electron transfer chain that converts photonic excitation into a charge separation. This subunit is found at the monomer-monomer interface. This chain is Photosystem II reaction center protein M, found in Prochlorococcus marinus (strain NATL1A).